A 247-amino-acid chain; its full sequence is TM2 domain-containing protein 3 (247 aa).

Positions 1 to 25 are cleaved as a signal peptide; sequence MIPMMTLKRVCRVLLFITQMYVLSG. Residues 26 to 179 lie on the Extracellular side of the membrane; it reads RGFLSFEYSE…RTFPKMLYCN (154 aa). N-linked (GlcNAc...) asparagine glycans are attached at residues Asn-87, Asn-99, Asn-139, Asn-155, Asn-169, and Asn-179. The helical transmembrane segment at 180–200 threads the bilayer; it reads WTGGYKWSTALALSITLGGFG. A TM2 domain is found at 183–231; the sequence is GYKWSTALALSITLGGFGADRFYLGQWREGLGKLFSFGGLGIWTLIDVF. Topologically, residues 201 to 215 are cytoplasmic; sequence ADRFYLGQWREGLGK. A helical transmembrane segment spans residues 216–236; the sequence is LFSFGGLGIWTLIDVFLISVG. Residues 237-247 lie on the Extracellular side of the membrane; it reads YVGPADGSLYI.

It belongs to the TM2 family.

The protein resides in the membrane. In Xenopus tropicalis (Western clawed frog), this protein is TM2 domain-containing protein 3 (tm2d3).